The chain runs to 147 residues: 3-dehydroquinate dehydratase 2 (147 aa).

Tyrosine 23 acts as the Proton acceptor in catalysis. Residues asparagine 74, histidine 80, and aspartate 87 each coordinate substrate. Histidine 100 serves as the catalytic Proton donor. Residues 101–102 (IS) and arginine 111 each bind substrate.

It belongs to the type-II 3-dehydroquinase family. In terms of assembly, homododecamer.

The enzyme catalyses 3-dehydroquinate = 3-dehydroshikimate + H2O. It functions in the pathway metabolic intermediate biosynthesis; chorismate biosynthesis; chorismate from D-erythrose 4-phosphate and phosphoenolpyruvate: step 3/7. In terms of biological role, catalyzes a trans-dehydration via an enolate intermediate. The polypeptide is 3-dehydroquinate dehydratase 2 (aroQ2) (Agrobacterium fabrum (strain C58 / ATCC 33970) (Agrobacterium tumefaciens (strain C58))).